Consider the following 251-residue polypeptide: ATP synthase subunit a (251 aa).

Helical transmembrane passes span 28 to 48, 63 to 80, 86 to 106, 115 to 135, 154 to 176, 195 to 215, and 219 to 239; these read FTQS…IIAL, LVEI…EQIG, FFPF…LGLF, HVAV…AVAL, ALAP…SLSI, FMFL…LLPM, and VTLV…FAIL.

It belongs to the ATPase A chain family. As to quaternary structure, F-type ATPases have 2 components, CF(1) - the catalytic core - and CF(0) - the membrane proton channel. CF(1) has five subunits: alpha(3), beta(3), gamma(1), delta(1), epsilon(1). CF(0) has three main subunits: a(1), b(2) and c(9-12). The alpha and beta chains form an alternating ring which encloses part of the gamma chain. CF(1) is attached to CF(0) by a central stalk formed by the gamma and epsilon chains, while a peripheral stalk is formed by the delta and b chains.

It is found in the cell inner membrane. Functionally, key component of the proton channel; it plays a direct role in the translocation of protons across the membrane. The sequence is that of ATP synthase subunit a from Granulibacter bethesdensis (strain ATCC BAA-1260 / CGDNIH1).